A 46-amino-acid polypeptide reads, in one-letter code: Hellethionin-D (46 aa).

4 disulfide bridges follow: Cys3–Cys40, Cys4–Cys32, Cys12–Cys30, and Cys16–Cys26.

The protein belongs to the plant thionin (TC 1.C.44) family. 4 C-C subfamily.

The protein resides in the secreted. Thionins are small plant proteins which are toxic to animal cells. They seem to exert their toxic effect at the level of the cell membrane. Their precise function is not known. The chain is Hellethionin-D from Helleborus purpurascens (Purple hellebore).